A 235-amino-acid chain; its full sequence is Small ribosomal subunit protein uS5 (235 aa).

An S5 DRBM domain is found at 60–123 (ENQEVLDIAL…NYAKMNIIEI (64 aa)). Residues cysteine 127, cysteine 132, cysteine 134, and histidine 138 each coordinate Zn(2+).

This sequence belongs to the universal ribosomal protein uS5 family. As to quaternary structure, part of the 30S ribosomal subunit. Contacts protein S4. The cofactor is Zn(2+).

In terms of biological role, with S4 and S12 plays an important role in translational accuracy. The sequence is that of Small ribosomal subunit protein uS5 from Thermococcus kodakarensis (strain ATCC BAA-918 / JCM 12380 / KOD1) (Pyrococcus kodakaraensis (strain KOD1)).